Here is a 216-residue protein sequence, read N- to C-terminus: Serine acetyltransferase (216 aa).

This sequence belongs to the transferase hexapeptide repeat family.

The protein localises to the cytoplasm. It catalyses the reaction L-serine + acetyl-CoA = O-acetyl-L-serine + CoA. It participates in amino-acid biosynthesis; L-cysteine biosynthesis; L-cysteine from L-serine: step 1/2. With respect to regulation, inhibited by cysteine. Catalyzes the acetylation of serine by acetyl-CoA to produce O-acetylserine (OAS). This Bacillus licheniformis (strain ATCC 14580 / DSM 13 / JCM 2505 / CCUG 7422 / NBRC 12200 / NCIMB 9375 / NCTC 10341 / NRRL NRS-1264 / Gibson 46) protein is Serine acetyltransferase.